Consider the following 95-residue polypeptide: UPF0223 protein Bsph_1378 (95 aa).

Belongs to the UPF0223 family.

This is UPF0223 protein Bsph_1378 from Lysinibacillus sphaericus (strain C3-41).